The primary structure comprises 307 residues: UDP-3-O-acyl-N-acetylglucosamine deacetylase (307 aa).

Zn(2+) is bound by residues His-80, His-239, and Asp-243. His-266 (proton donor) is an active-site residue.

The protein belongs to the LpxC family. The cofactor is Zn(2+).

It catalyses the reaction a UDP-3-O-[(3R)-3-hydroxyacyl]-N-acetyl-alpha-D-glucosamine + H2O = a UDP-3-O-[(3R)-3-hydroxyacyl]-alpha-D-glucosamine + acetate. It functions in the pathway glycolipid biosynthesis; lipid IV(A) biosynthesis; lipid IV(A) from (3R)-3-hydroxytetradecanoyl-[acyl-carrier-protein] and UDP-N-acetyl-alpha-D-glucosamine: step 2/6. Functionally, catalyzes the hydrolysis of UDP-3-O-myristoyl-N-acetylglucosamine to form UDP-3-O-myristoylglucosamine and acetate, the committed step in lipid A biosynthesis. The sequence is that of UDP-3-O-acyl-N-acetylglucosamine deacetylase from Neisseria meningitidis serogroup C / serotype 2a (strain ATCC 700532 / DSM 15464 / FAM18).